Consider the following 480-residue polypeptide: Adenosylhomocysteinase (480 aa).

Substrate is bound by residues Thr-63, Asp-142, and Glu-203. Thr-204–Thr-206 contributes to the NAD(+) binding site. Substrate-binding residues include Lys-233 and Asp-237. NAD(+) is bound by residues Asn-238, Gly-267–Gly-272, Glu-290, Asn-325, Ile-346–His-348, and Asn-394.

This sequence belongs to the adenosylhomocysteinase family. It depends on NAD(+) as a cofactor.

The protein resides in the cytoplasm. The enzyme catalyses S-adenosyl-L-homocysteine + H2O = L-homocysteine + adenosine. The protein operates within amino-acid biosynthesis; L-homocysteine biosynthesis; L-homocysteine from S-adenosyl-L-homocysteine: step 1/1. Its function is as follows. May play a key role in the regulation of the intracellular concentration of adenosylhomocysteine. The sequence is that of Adenosylhomocysteinase from Xylella fastidiosa (strain Temecula1 / ATCC 700964).